The chain runs to 399 residues: Elongation factor Tu (399 aa).

The 195-residue stretch at 10-204 folds into the tr-type G domain; sequence KPHVNIGTIG…AVDASIPEPE (195 aa). A G1 region spans residues 19–26; sequence GHVDHGKT. 19 to 26 provides a ligand contact to GTP; sequence GHVDHGKT. Threonine 26 is a Mg(2+) binding site. The interval 60–64 is G2; that stretch reads GITIN. The segment at 81 to 84 is G3; that stretch reads DCPG. GTP is bound by residues 81-85 and 136-139; these read DCPGH and NKCD. The segment at 136–139 is G4; sequence NKCD. Residues 174-176 form a G5 region; it reads SGL.

This sequence belongs to the TRAFAC class translation factor GTPase superfamily. Classic translation factor GTPase family. EF-Tu/EF-1A subfamily. As to quaternary structure, monomer.

The protein localises to the cytoplasm. It catalyses the reaction GTP + H2O = GDP + phosphate + H(+). Functionally, GTP hydrolase that promotes the GTP-dependent binding of aminoacyl-tRNA to the A-site of ribosomes during protein biosynthesis. This is Elongation factor Tu from Synechococcus sp. (strain CC9311).